The primary structure comprises 421 residues: Ameloblastin (421 aa).

Positions 1–26 are cleaved as a signal peptide; sequence MPALKIPLFKMKDMVLILCLLKMSSA. A Hydroxyproline modification is found at P37. A Phosphoserine modification is found at S43. Disordered regions lie at residues 104 to 126, 264 to 311, and 333 to 421; these read PVHPPPLPSQPSLQPQQPGQKPF, GGMP…ADPE, and GKIP…FQEP. A glycan (O-linked (GalNAc...) serine) is linked at S112. Over residues 113 to 125 the composition is skewed to low complexity; that stretch reads QPSLQPQQPGQKP. Residues 339 to 350 are compositionally biased toward low complexity; that stretch reads ARGPAGRSRGPP. Residues 388 to 410 are compositionally biased toward polar residues; that stretch reads MDSTATPYSEHTSMPGNKAQQPQ. A compositionally biased stretch (basic and acidic residues) spans 411 to 421; the sequence is IKRDAWRFQEP.

It belongs to the ameloblastin family. In terms of tissue distribution, ameloblast-specific. Located at the Tomes processes of secretory ameloblasts and in the sheath space between rod-interrod enamel.

The protein localises to the secreted. The protein resides in the extracellular space. It is found in the extracellular matrix. Its function is as follows. Involved in the mineralization and structural organization of enamel. This is Ameloblastin (AMBN) from Sus scrofa (Pig).